The chain runs to 784 residues: Ubiquitin carboxyl-terminal hydrolase 1 (784 aa).

Disordered regions lie at residues 1–21 (MPGV…SKKN) and 33–54 (TKRA…EYRG). The segment covering 7–16 (SESNGLSRGS) has biased composition (polar residues). Residues serine 16, serine 42, and serine 67 each carry the phosphoserine modification. The USP domain maps to 81-784 (VGLNNLGNTC…TPYLLFYKKL (704 aa)). Residue cysteine 90 is the Nucleophile of the active site. Basic and acidic residues-rich tracts occupy residues 232–243 (KVEEKSLQKEET) and 252–264 (DSTR…KEQL). 2 disordered regions span residues 232–341 (KVEE…KINW) and 363–411 (TNQR…SSEA). Residues 389 to 407 (NTVNGSGPASPGSSVTPVD) are compositionally biased toward polar residues. At serine 475 the chain carries Phosphoserine. The active-site Proton acceptor is the histidine 593. A disordered region spans residues 686–723 (PEKVVGTPFTDSRNSETNDTNGTQESDRSKESSDQTGI). The span at 694–709 (FTDSRNSETNDTNGTQ) shows a compositional bias: polar residues. Residue serine 767 is modified to Phosphoserine.

Belongs to the peptidase C19 family. In terms of assembly, interacts with FANCD2 and PCNA. Interacts with WDR48. Interacts with ATAD5; the interaction regulates USP1-mediated PCNA deubiquitination. Autocatalytic cleavage of USP1 following UV irradiation inactivates it, leading to an increase in ubiquitinated PCNA, recruitment of POLH and translesion synthesis. In terms of processing, ubiquitinated by the CRL2(KLHDC2) complex following autocatalytic cleavage, leading to its degradation: the CRL2(KLHDC2) complex recognizes the diglycine (Gly-Gly) at the C-terminus.

The protein localises to the nucleus. The catalysed reaction is Thiol-dependent hydrolysis of ester, thioester, amide, peptide and isopeptide bonds formed by the C-terminal Gly of ubiquitin (a 76-residue protein attached to proteins as an intracellular targeting signal).. Its function is as follows. Negative regulator of DNA damage repair which specifically deubiquitinates monoubiquitinated FANCD2. Also involved in PCNA-mediated translesion synthesis (TLS) by deubiquitinating monoubiquitinated PCNA. Has almost no deubiquitinating activity by itself and requires the interaction with WDR48 to have a high activity. The chain is Ubiquitin carboxyl-terminal hydrolase 1 from Rattus norvegicus (Rat).